A 64-amino-acid chain; its full sequence is MPKMKTNRGASKRFKVKKNLIKRGSAFKSHILTKKSPKRKANLNAPKHVHHTNAHSVMSLLCRA.

The segment covering 38–53 has biased composition (basic residues); sequence KRKANLNAPKHVHHTN. The segment at 38–64 is disordered; it reads KRKANLNAPKHVHHTNAHSVMSLLCRA.

The protein belongs to the bacterial ribosomal protein bL35 family.

In Helicobacter pylori (strain G27), this protein is Large ribosomal subunit protein bL35.